Here is a 504-residue protein sequence, read N- to C-terminus: L-amino-acid oxidase (504 aa).

The N-terminal stretch at methionine 1–cysteine 18 is a signal peptide. A disulfide bridge connects residues cysteine 28 and cysteine 191. Residues methionine 61–serine 62, glutamate 81–alanine 82, arginine 89, and glycine 105–arginine 108 contribute to the FAD site. Arginine 108 serves as a coordination point for substrate. N-linked (GlcNAc...) asparagine glycosylation is present at asparagine 190. A substrate-binding site is contributed by histidine 241. Valine 279 provides a ligand contact to FAD. A disulfide bond links cysteine 349 and cysteine 430. The N-linked (GlcNAc...) asparagine glycan is linked to asparagine 379. Tyrosine 390 serves as a coordination point for substrate. Residues glutamate 475 and glycine 482 to threonine 487 contribute to the FAD site. Position 482-483 (glycine 482–tryptophan 483) interacts with substrate.

It belongs to the flavin monoamine oxidase family. FIG1 subfamily. In terms of assembly, homodimer; non-covalently linked. It depends on FAD as a cofactor. In terms of tissue distribution, expressed by the venom gland.

Its subcellular location is the secreted. It carries out the reaction an L-alpha-amino acid + O2 + H2O = a 2-oxocarboxylate + H2O2 + NH4(+). It catalyses the reaction L-leucine + O2 + H2O = 4-methyl-2-oxopentanoate + H2O2 + NH4(+). Functionally, catalyzes an oxidative deamination of predominantly hydrophobic and aromatic L-amino acids, thus producing hydrogen peroxide that may contribute to the diverse toxic effects of this enzyme. Shows activity on L-Leu. Exhibits diverse biological activities, such as hemorrhage, hemolysis, edema, antibacterial and antiparasitic activities, as well as regulation of platelet aggregation. Its effect on platelets is controversial, since it either induces aggregation or inhibits agonist-induced aggregation. These different effects are probably due to different experimental conditions. This protein induces apoptosis of cultured HeLa cells. In Gloydius halys (Chinese water mocassin), this protein is L-amino-acid oxidase.